The chain runs to 234 residues: Ion-translocating oxidoreductase complex subunit E (234 aa).

Transmembrane regions (helical) follow at residues 62–82 (LGLG…ISLF), 92–112 (IPIY…LMNA), 116–136 (TLYQ…IIIG), 151–171 (IWDG…LGAL), and 205–225 (SFLL…LLAI).

The protein belongs to the NqrDE/RnfAE family. In terms of assembly, the complex is composed of six subunits: RnfA, RnfB, RnfC, RnfD, RnfE and RnfG.

Its subcellular location is the cell inner membrane. In terms of biological role, part of a membrane-bound complex that couples electron transfer with translocation of ions across the membrane. In Haemophilus influenzae (strain PittGG), this protein is Ion-translocating oxidoreductase complex subunit E.